The following is a 364-amino-acid chain: Deoxyribonuclease-2-alpha (364 aa).

The first 21 residues, 1 to 21 (MATLSPLLLAALLWVPVGTLT), serve as a signal peptide directing secretion. A disulfide bridge connects residues Cys22 and Cys161. N-linked (GlcNAc...) asparagine glycosylation is found at Asn72, Asn88, Asn171, Asn214, Asn268, and Asn292. 2 disulfides stabilise this stretch: Cys269/Cys349 and Cys310/Cys329. The active site involves His297.

Belongs to the DNase II family.

It is found in the lysosome. The enzyme catalyses Endonucleolytic cleavage to nucleoside 3'-phosphates and 3'-phosphooligonucleotide end-products.. Its function is as follows. Hydrolyzes DNA under acidic conditions with a preference for double-stranded DNA. Plays a major role in the clearance of nucleic acids generated through apoptosis, hence preventing autoinflammation. Necessary for proper fetal development and for definitive erythropoiesis in fetal liver and bone marrow, where it degrades nuclear DNA expelled from erythroid precursor cells. This chain is Deoxyribonuclease-2-alpha (DNASE2), found in Sus scrofa (Pig).